We begin with the raw amino-acid sequence, 173 residues long: Pyridoxal 5'-phosphate synthase subunit PdxT (173 aa).

An L-glutamine-binding site is contributed by Gly49–Ser51. The active-site Nucleophile is the Cys81. Residues Arg113 and Ile141–Arg142 each bind L-glutamine.

It belongs to the glutaminase PdxT/SNO family. In terms of assembly, in the presence of PdxS, forms a dodecamer of heterodimers. Only shows activity in the heterodimer.

The enzyme catalyses aldehydo-D-ribose 5-phosphate + D-glyceraldehyde 3-phosphate + L-glutamine = pyridoxal 5'-phosphate + L-glutamate + phosphate + 3 H2O + H(+). It carries out the reaction L-glutamine + H2O = L-glutamate + NH4(+). It functions in the pathway cofactor biosynthesis; pyridoxal 5'-phosphate biosynthesis. Functionally, catalyzes the hydrolysis of glutamine to glutamate and ammonia as part of the biosynthesis of pyridoxal 5'-phosphate. The resulting ammonia molecule is channeled to the active site of PdxS. This is Pyridoxal 5'-phosphate synthase subunit PdxT from Mycolicibacterium paratuberculosis (strain ATCC BAA-968 / K-10) (Mycobacterium paratuberculosis).